The chain runs to 207 residues: Mediator of RNA polymerase II transcription subunit 21 (207 aa).

Residues 37-121 (PHPDVPDAAP…PDSPRTFASR (85 aa)) are disordered. Positions 65–80 (PVPAQSQASPPAQNPA) are enriched in low complexity. Positions 84 to 96 (AGAGTSVGEGGQT) are enriched in gly residues. The span at 97 to 108 (PGPAAGAGADPN) shows a compositional bias: low complexity. The stretch at 146–196 (IDSSEAEQEKRIRELEGELRRVEEERELKMRELKRLRRTLENVLRAVETGL) forms a coiled coil.

Belongs to the Mediator complex subunit 21 family. As to quaternary structure, component of the Mediator complex.

Its subcellular location is the nucleus. Functionally, component of the Mediator complex, a coactivator involved in the regulated transcription of nearly all RNA polymerase II-dependent genes. Mediator functions as a bridge to convey information from gene-specific regulatory proteins to the basal RNA polymerase II transcription machinery. Mediator is recruited to promoters by direct interactions with regulatory proteins and serves as a scaffold for the assembly of a functional preinitiation complex with RNA polymerase II and the general transcription factors. This Neosartorya fischeri (strain ATCC 1020 / DSM 3700 / CBS 544.65 / FGSC A1164 / JCM 1740 / NRRL 181 / WB 181) (Aspergillus fischerianus) protein is Mediator of RNA polymerase II transcription subunit 21 (srb7).